Consider the following 548-residue polypeptide: T-complex protein 1 subunit theta (548 aa).

The segment at 528-548 is disordered; that stretch reads ATGGPKPRGPKQQDEDDDGMA.

This sequence belongs to the TCP-1 chaperonin family. Heterooligomeric complex.

The protein resides in the cytoplasm. Molecular chaperone; assists the folding of proteins upon ATP hydrolysis. Known to play a role, in vitro, in the folding of actin and tubulin. Required for correct subcellular localization of pgl-1. The chain is T-complex protein 1 subunit theta from Caenorhabditis briggsae.